Here is an 83-residue protein sequence, read N- to C-terminus: NAD(P)H-quinone oxidoreductase subunit L (83 aa).

Helical transmembrane passes span 18–38 and 53–73; these read IGGY…LLFF and FSVY…APFL.

The protein belongs to the complex I NdhL subunit family. In terms of assembly, NDH-1 can be composed of about 15 different subunits; different subcomplexes with different compositions have been identified which probably have different functions.

The protein localises to the cellular thylakoid membrane. It carries out the reaction a plastoquinone + NADH + (n+1) H(+)(in) = a plastoquinol + NAD(+) + n H(+)(out). It catalyses the reaction a plastoquinone + NADPH + (n+1) H(+)(in) = a plastoquinol + NADP(+) + n H(+)(out). Its function is as follows. NDH-1 shuttles electrons from an unknown electron donor, via FMN and iron-sulfur (Fe-S) centers, to quinones in the respiratory and/or the photosynthetic chain. The immediate electron acceptor for the enzyme in this species is believed to be plastoquinone. Couples the redox reaction to proton translocation, and thus conserves the redox energy in a proton gradient. Cyanobacterial NDH-1 also plays a role in inorganic carbon-concentration. This Synechococcus sp. (strain CC9311) protein is NAD(P)H-quinone oxidoreductase subunit L.